The chain runs to 328 residues: Methionyl-tRNA formyltransferase (328 aa).

121-124 (SLLP) lines the (6S)-5,6,7,8-tetrahydrofolate pocket.

It belongs to the Fmt family.

The enzyme catalyses L-methionyl-tRNA(fMet) + (6R)-10-formyltetrahydrofolate = N-formyl-L-methionyl-tRNA(fMet) + (6S)-5,6,7,8-tetrahydrofolate + H(+). Its function is as follows. Attaches a formyl group to the free amino group of methionyl-tRNA(fMet). The formyl group appears to play a dual role in the initiator identity of N-formylmethionyl-tRNA by promoting its recognition by IF2 and preventing the misappropriation of this tRNA by the elongation apparatus. In Paraburkholderia xenovorans (strain LB400), this protein is Methionyl-tRNA formyltransferase.